We begin with the raw amino-acid sequence, 129 residues long: Small ribosomal subunit protein uS9 (129 aa).

It belongs to the universal ribosomal protein uS9 family.

This chain is Small ribosomal subunit protein uS9, found in Chlorobium luteolum (strain DSM 273 / BCRC 81028 / 2530) (Pelodictyon luteolum).